The following is a 1079-amino-acid chain: MVCSAAPLLLLATTLPLLGSPVAQASQPVSETGVRPREGLQRRQWGPLIGRDKAWNERIDRPFPACPIPLSSSFGRWPKGQTMWAQTSTLTLTEEELGQSQAGGESGSGQLLDQENGAGESALVSVYVHLDFPDKTWPPELSRTLTLPAASASSSPRPLLTGLRLTTECNVNHKGNFYCACLSGYQWNTSICLHYPPCQSLHNHQPCGCLVFSHPEPGYCQLLPPGSPVTCLPAVPGILNLNSQLQMPGDTLSLTLHLSQEATNLSWFLRHPGSPSPILLQPGTQVSVTSSHGQAALSVSNMSHHWAGEYMSCFEAQGFKWNLYEVVRVPLKATDVARLPYQLSISCATSPGFQLSCCIPSTNLAYTAAWSPGEGSKASSFNESGSQCFVLAVQRCPMADTTYACDLQSLGLAPLRVPISITIIQDGDITCPEDASVLTWNVTKAGHVAQAPCPESKRGIVRRLCGADGVWGPVHSSCTDARLLALFTRTKLLQAGQGSPAEEVPQILAQLPGQAAEASSPSDLLTLLSTMKYVAKVVAEARIQLDRRALKNLLIATDKVLDMDTRSLWTLAQARKPWAGSTLLLAVETLACSLCPQDHPFAFSLPNVLLQSQLFGPTFPADYSISFPTRPPLQAQIPRHSLAPLVRNGTEISITSLVLRKLDHLLPSNYGQGLGDSLYATPGLVLVISIMAGDRAFSQGEVIMDFGNTDGSPHCVFWDHSLFQGRGGWSKEGCQAQVASASPTAQCLCQHLTAFSVLMSPHTVPEEPALALLTQVGLGASILALLVCLGVYWLVWRVVVRNKISYFRHAALLNMVFCLLAADTCFLGAPFLSPGPRSPLCLAAAFLCHFLYLATFFWMLAQALVLAHQLLFVFHQLAKHRVLPLMVLLGYLCPLGLAGVTLGLYLPQGQYLREGECWLDGKGGALYTFVGPVLAIIGVNGLVLAMAMLKLLRPSLSEGPPAEKRQALLGVIKALLILTPIFGLTWGLGLATLLEEVSTVPHYIFTILNTLQGVFILLFGCLMDRKIQEALRKRFCRAQAPSSTISLVSCCLQILSCASKSMSEGIPWPSSEDMGTARS.

The first 25 residues, 1 to 25 (MVCSAAPLLLLATTLPLLGSPVAQA), serve as a signal peptide directing secretion. Residues 26-775 (SQPVSETGVR…EEPALALLTQ (750 aa)) are Extracellular-facing. 6 N-linked (GlcNAc...) asparagine glycosylation sites follow: Asn-188, Asn-264, Asn-301, Asn-382, Asn-441, and Asn-648. Residues 599–765 (HPFAFSLPNV…SVLMSPHTVP (167 aa)) enclose the GAIN-B domain. 2 disulfides stabilise this stretch: Cys-715–Cys-747 and Cys-734–Cys-749. The segment at 715–765 (CVFWDHSLFQGRGGWSKEGCQAQVASASPTAQCLCQHLTAFSVLMSPHTVP) is GPS. A helical transmembrane segment spans residues 776-796 (VGLGASILALLVCLGVYWLVW). The Cytoplasmic segment spans residues 797–811 (RVVVRNKISYFRHAA). A helical membrane pass occupies residues 812–832 (LLNMVFCLLAADTCFLGAPFL). Topologically, residues 833 to 851 (SPGPRSPLCLAAAFLCHFL) are extracellular. The helical transmembrane segment at 852–874 (YLATFFWMLAQALVLAHQLLFVF) threads the bilayer. Residues 875–881 (HQLAKHR) are Cytoplasmic-facing. Residues 882 to 902 (VLPLMVLLGYLCPLGLAGVTL) form a helical membrane-spanning segment. The Extracellular segment spans residues 903–928 (GLYLPQGQYLREGECWLDGKGGALYT). Residues 929 to 949 (FVGPVLAIIGVNGLVLAMAML) form a helical membrane-spanning segment. The Cytoplasmic segment spans residues 950 to 973 (KLLRPSLSEGPPAEKRQALLGVIK). The helical transmembrane segment at 974-994 (ALLILTPIFGLTWGLGLATLL) threads the bilayer. Residues 995–1002 (EEVSTVPH) are Extracellular-facing. A helical membrane pass occupies residues 1003–1023 (YIFTILNTLQGVFILLFGCLM). Over 1024–1079 (DRKIQEALRKRFCRAQAPSSTISLVSCCLQILSCASKSMSEGIPWPSSEDMGTARS) the chain is Cytoplasmic.

This sequence belongs to the G-protein coupled receptor 2 family. Adhesion G-protein coupled receptor (ADGR) subfamily. Heterodimer of 2 chains generated by proteolytic processing; the large extracellular N-terminal fragment and the membrane-bound C-terminal fragment predominantly remain associated and non-covalently linked. Post-translationally, autoproteolytically processed at the GPS region of the GAIN-B domain; this cleavage modulates receptor activity.

Its subcellular location is the membrane. In terms of biological role, orphan receptor. This Homo sapiens (Human) protein is Adhesion G-protein coupled receptor F3 (ADGRF3).